A 758-amino-acid chain; its full sequence is 5-methyltetrahydropteroyltriglutamate--homocysteine methyltransferase (758 aa).

5-methyltetrahydropteroyltri-L-glutamate contacts are provided by residues 17–20 and K113; that span reads RELK. Residues 433 to 435 and E486 each bind L-homocysteine; that span reads IGS. Residues 433–435 and E486 contribute to the L-methionine site; that span reads IGS. 5-methyltetrahydropteroyltri-L-glutamate contacts are provided by residues 517–518 and W563; that span reads RC. D601 contacts L-homocysteine. D601 serves as a coordination point for L-methionine. Position 607 (E607) interacts with 5-methyltetrahydropteroyltri-L-glutamate. Zn(2+) is bound by residues H643, C645, and E667. H696 (proton donor) is an active-site residue. C728 contacts Zn(2+).

This sequence belongs to the vitamin-B12 independent methionine synthase family. It depends on Zn(2+) as a cofactor.

The enzyme catalyses 5-methyltetrahydropteroyltri-L-glutamate + L-homocysteine = tetrahydropteroyltri-L-glutamate + L-methionine. It participates in amino-acid biosynthesis; L-methionine biosynthesis via de novo pathway; L-methionine from L-homocysteine (MetE route): step 1/1. Its function is as follows. Catalyzes the transfer of a methyl group from 5-methyltetrahydrofolate to homocysteine resulting in methionine formation. This Nitrosomonas europaea (strain ATCC 19718 / CIP 103999 / KCTC 2705 / NBRC 14298) protein is 5-methyltetrahydropteroyltriglutamate--homocysteine methyltransferase.